Consider the following 303-residue polypeptide: Secreted mono- and diacylglycerol lipase LIP4 (303 aa).

An N-terminal signal peptide occupies residues 1 to 16 (MHFLAFLLCLIPLALC). C54 and C293 are disulfide-bonded. Residue S167 is the Nucleophile of the active site. Residue D224 is part of the active site.

Belongs to the AB hydrolase superfamily. Lipase family. Class 3 subfamily.

It localises to the secreted. The catalysed reaction is a monoacylglycerol + H2O = glycerol + a fatty acid + H(+). The enzyme catalyses a diacylglycerol + H2O = a monoacylglycerol + a fatty acid + H(+). Functionally, secreted lipase involved in Dandruff and seborrheic dermatitis (D/SD) probably via lipase-mediated breakdown of sebaceous lipids and release of irritating free fatty acids. Shows activity against monoglyceride and diglyceride substrates. Due to an absence of fatty acid synthase genes in Malassezia species, secretory lipases are essential for the yeast to generate free fatty acids from degradation of sebum and assimilate them as lipid sources for growth. Plays an essential role at the pathogen-host interface during disease progression. This chain is Secreted mono- and diacylglycerol lipase LIP4, found in Malassezia restricta (strain ATCC 96810 / NBRC 103918 / CBS 7877) (Seborrheic dermatitis infection agent).